The sequence spans 317 residues: Transaldolase (317 aa).

The active-site Schiff-base intermediate with substrate is Lys-126.

The protein belongs to the transaldolase family. Type 1 subfamily. As to quaternary structure, homodimer.

The protein localises to the cytoplasm. The catalysed reaction is D-sedoheptulose 7-phosphate + D-glyceraldehyde 3-phosphate = D-erythrose 4-phosphate + beta-D-fructose 6-phosphate. It participates in carbohydrate degradation; pentose phosphate pathway; D-glyceraldehyde 3-phosphate and beta-D-fructose 6-phosphate from D-ribose 5-phosphate and D-xylulose 5-phosphate (non-oxidative stage): step 2/3. Transaldolase is important for the balance of metabolites in the pentose-phosphate pathway. In Burkholderia mallei (strain SAVP1), this protein is Transaldolase.